The sequence spans 294 residues: 4-hydroxy-tetrahydrodipicolinate synthase (294 aa).

Threonine 45 is a pyruvate binding site. Tyrosine 133 functions as the Proton donor/acceptor in the catalytic mechanism. The Schiff-base intermediate with substrate role is filled by lysine 162. Residue isoleucine 204 participates in pyruvate binding.

This sequence belongs to the DapA family. As to quaternary structure, homotetramer; dimer of dimers.

The protein resides in the cytoplasm. It catalyses the reaction L-aspartate 4-semialdehyde + pyruvate = (2S,4S)-4-hydroxy-2,3,4,5-tetrahydrodipicolinate + H2O + H(+). It participates in amino-acid biosynthesis; L-lysine biosynthesis via DAP pathway; (S)-tetrahydrodipicolinate from L-aspartate: step 3/4. Catalyzes the condensation of (S)-aspartate-beta-semialdehyde [(S)-ASA] and pyruvate to 4-hydroxy-tetrahydrodipicolinate (HTPA). The chain is 4-hydroxy-tetrahydrodipicolinate synthase from Bartonella quintana (strain Toulouse) (Rochalimaea quintana).